We begin with the raw amino-acid sequence, 204 residues long: Protein XpaC (204 aa).

In terms of biological role, in double copy it causes aberrant cell morphology, filamentation and inhibits sporulation. Hydrolyzes 5-bromo-4-chloroindolyl phosphate. This Bacillus subtilis (strain 168) protein is Protein XpaC (xpaC).